The following is a 401-amino-acid chain: Beta-ketoadipyl-CoA thiolase (401 aa).

Cys90 acts as the Acyl-thioester intermediate in catalysis. Active-site proton acceptor residues include His357 and Cys387.

This sequence belongs to the thiolase-like superfamily. Thiolase family.

The catalysed reaction is succinyl-CoA + acetyl-CoA = 3-oxoadipyl-CoA + CoA. Its pathway is aromatic compound metabolism; beta-ketoadipate pathway; acetyl-CoA and succinyl-CoA from 3-oxoadipate: step 2/2. In terms of biological role, catalyzes thiolytic cleavage of beta-ketoadipyl-CoA to succinyl-CoA and acetyl-CoA. This is Beta-ketoadipyl-CoA thiolase (catF) from Acinetobacter baylyi (strain ATCC 33305 / BD413 / ADP1).